The sequence spans 208 residues: Small ribosomal subunit protein uS4 (208 aa).

Residues Thr-98–Ala-164 form the S4 RNA-binding domain.

The protein belongs to the universal ribosomal protein uS4 family. In terms of assembly, part of the 30S ribosomal subunit. Contacts protein S5. The interaction surface between S4 and S5 is involved in control of translational fidelity.

Functionally, one of the primary rRNA binding proteins, it binds directly to 16S rRNA where it nucleates assembly of the body of the 30S subunit. In terms of biological role, with S5 and S12 plays an important role in translational accuracy. This Ruminiclostridium cellulolyticum (strain ATCC 35319 / DSM 5812 / JCM 6584 / H10) (Clostridium cellulolyticum) protein is Small ribosomal subunit protein uS4.